Consider the following 171-residue polypeptide: MKVYACLCAAVVMLVMTSRVSEARSTGAPLSACRDMMPQHNATAQTSPPPYTITTDAQSVAPGDSVEVVIAGKLPEDTLRGYLLQARQGDDILGTFSLEDGDVFSQLINCGKPGNAVTHKKHDNKEDKRQVRVRWSPPQGLTGEVVFRATIVKTLKVFWVGVQSAPIKIVS.

The first 23 residues, 1–23, serve as a signal peptide directing secretion; it reads MKVYACLCAAVVMLVMTSRVSEA. The 148-residue stretch at 24–171 folds into the Reelin domain; sequence RSTGAPLSAC…VQSAPIKIVS (148 aa). Cys-33 and Cys-110 are oxidised to a cystine. Asn-41 carries an N-linked (GlcNAc...) asparagine glycan.

The protein belongs to the insect defense protein family.

Its subcellular location is the secreted. Its function is as follows. May have antimicrobial activity. The protein is Putative defense protein of Bombyx mori (Silk moth).